The following is a 387-amino-acid chain: 3-ketoacyl-CoA thiolase (387 aa).

The active-site Acyl-thioester intermediate is the C91. Residues H343 and C373 each act as proton acceptor in the active site.

It belongs to the thiolase-like superfamily. Thiolase family. Heterotetramer of two alpha chains (FadB) and two beta chains (FadA).

It is found in the cytoplasm. It carries out the reaction an acyl-CoA + acetyl-CoA = a 3-oxoacyl-CoA + CoA. Its pathway is lipid metabolism; fatty acid beta-oxidation. Functionally, catalyzes the final step of fatty acid oxidation in which acetyl-CoA is released and the CoA ester of a fatty acid two carbons shorter is formed. The chain is 3-ketoacyl-CoA thiolase from Shewanella oneidensis (strain ATCC 700550 / JCM 31522 / CIP 106686 / LMG 19005 / NCIMB 14063 / MR-1).